A 778-amino-acid chain; its full sequence is Pentatricopeptide repeat-containing protein At3g09650, chloroplastic (778 aa).

Residues 1 to 65 constitute a chloroplast transit peptide; sequence MNILRPPTSS…RSASGTANSS (65 aa). PPR repeat units follow at residues 235–269, 270–304, and 305–339; these read DTAAFNAVLNACANLGDTDKYWKLFEEMSEWDCEP, DVLTYNVMIKLCARVGRKELIVFVLERIIDKGIKV, and CMTTMHSLVAAYVGFGDLRTAERIVQAMREKRRDL. Positions 351 to 381 are disordered; that stretch reads LKEKEEEEAEDDEDAFEDDEDSGYSARDEVS. Positions 355-372 are enriched in acidic residues; the sequence is EEEEAEDDEDAFEDDEDS. PPR repeat units lie at residues 413–443, 451–485, 486–521, 522–556, 557–587, 593–627, and 628–658; these read DSRIYTTLMKGYMKNGRVADTARMLEAMRRQ, DEVTYTTVVSAFVNAGLMDRARQVLAEMARMGVPA, NRITYNVLLKGYCKQLQIDRAEDLLREMTEDAGIEP, DVVSYNIIIDGCILIDDSAGALAFFNEMRTRGIAP, TKISYTTLMKAFAMSGQPKLANRVFDEMMND, DLIAWNMLVEGYCRLGLIEDAQRVVSRMKENGFYP, and NVATYGSLANGVSQARKPGDALLLWKEIKER.

The protein belongs to the PPR family. P subfamily.

It localises to the plastid. It is found in the chloroplast stroma. Its function is as follows. Involved in the processing of polycistronic chloroplast psbB-psbT-psbH-petB-petD transcript. Could bind RNA. In Arabidopsis thaliana (Mouse-ear cress), this protein is Pentatricopeptide repeat-containing protein At3g09650, chloroplastic (HCF152).